A 329-amino-acid polypeptide reads, in one-letter code: Acrosin (329 aa).

The signal sequence occupies residues methionine 1–arginine 17. Asparagine 19 is a glycosylation site (N-linked (GlcNAc...) asparagine). 6 disulfides stabilise this stretch: cysteine 22–cysteine 152, cysteine 26–cysteine 160, cysteine 71–cysteine 87, cysteine 175–cysteine 244, cysteine 207–cysteine 223, and cysteine 234–cysteine 264. The Peptidase S1 domain maps to isoleucine 40 to glycine 288. Residues histidine 86 and aspartate 140 each act as charge relay system in the active site. A glycan (N-linked (GlcNAc...) asparagine) is linked at asparagine 208. Catalysis depends on serine 238, which acts as the Charge relay system.

It belongs to the peptidase S1 family. As to quaternary structure, heavy chain (catalytic) and a light chain linked by two disulfide bonds. Forms a heterodimer with SERPINA5.

It carries out the reaction Preferential cleavage: Arg-|-Xaa, Lys-|-Xaa.. With respect to regulation, inhibited by SERPINA5. Acrosin is the major protease of mammalian spermatozoa. It is a serine protease of trypsin-like cleavage specificity, it is synthesized in a zymogen form, proacrosin and stored in the acrosome. The polypeptide is Acrosin (ACR) (Ovis aries (Sheep)).